The sequence spans 546 residues: Chaperonin GroEL (546 aa).

ATP contacts are provided by residues 29–32 (TLGP), lysine 50, 86–90 (DGTTT), glycine 414, 477–479 (NAL), and aspartate 493.

It belongs to the chaperonin (HSP60) family. Forms a cylinder of 14 subunits composed of two heptameric rings stacked back-to-back. Interacts with the co-chaperonin GroES.

It localises to the cytoplasm. The enzyme catalyses ATP + H2O + a folded polypeptide = ADP + phosphate + an unfolded polypeptide.. In terms of biological role, together with its co-chaperonin GroES, plays an essential role in assisting protein folding. The GroEL-GroES system forms a nano-cage that allows encapsulation of the non-native substrate proteins and provides a physical environment optimized to promote and accelerate protein folding. The chain is Chaperonin GroEL from Leptospira interrogans serogroup Icterohaemorrhagiae serovar Lai (strain 56601).